The primary structure comprises 293 residues: Cell division protein FtsQ (293 aa).

Topologically, residues 1-27 (MRPLMRNRASERGVDPAPSRWAWRMQR) are cytoplasmic. The chain crosses the membrane as a helical span at residues 28-48 (LLLTPAFLLFLRAGVPVLVLF). Residues 49-293 (GAATWWLSDT…WWEIRQVSRQ (245 aa)) lie on the Periplasmic side of the membrane. The region spanning 81 to 149 (FMVQLMAVDG…GVLHIDVEPR (69 aa)) is the POTRA domain.

The protein belongs to the FtsQ/DivIB family. FtsQ subfamily.

The protein localises to the cell inner membrane. Essential cell division protein. This Roseobacter litoralis (strain ATCC 49566 / DSM 6996 / JCM 21268 / NBRC 15278 / OCh 149) protein is Cell division protein FtsQ.